The primary structure comprises 214 residues: Adenylate kinase (214 aa).

An ATP-binding site is contributed by 12–17; that stretch reads GVGKGT. Positions 32 to 61 are NMP; the sequence is STGNIFRSQIASNSELGIKLKEIVESGGYV. AMP-binding positions include T33, R38, 59–61, 88–91, and Q95; these read GYV and GYPR. Positions 126-163 are LID; sequence GRRICPSCNAQYHIYFKKSKLDTKCEIDQSELIQRKDD. Residue R127 coordinates ATP. Zn(2+) is bound by residues C130, C133, C150, and D153. Residues R160 and R171 each coordinate AMP. K199 provides a ligand contact to ATP.

It belongs to the adenylate kinase family. Monomer.

Its subcellular location is the cytoplasm. It catalyses the reaction AMP + ATP = 2 ADP. It participates in purine metabolism; AMP biosynthesis via salvage pathway; AMP from ADP: step 1/1. In terms of biological role, catalyzes the reversible transfer of the terminal phosphate group between ATP and AMP. Plays an important role in cellular energy homeostasis and in adenine nucleotide metabolism. This chain is Adenylate kinase, found in Mycoplasmopsis pulmonis (strain UAB CTIP) (Mycoplasma pulmonis).